Here is a 95-residue protein sequence, read N- to C-terminus: uncharacterized protein (95 aa).

A compositionally biased stretch (low complexity) spans 1 to 12 (MQNFMNNLSGGS). Residues 1–27 (MQNFMNNLSGGSNKEGGEKSNDFLSSA) form a disordered region.

This is an uncharacterized protein from Schizosaccharomyces pombe (strain 972 / ATCC 24843) (Fission yeast).